Reading from the N-terminus, the 471-residue chain is Neuraminidase (471 aa).

At 1–6 (MNPNQK) the chain is on the intravirion side. The helical transmembrane segment at 7-27 (IICISATGMTLSVVSLLIGIA) threads the bilayer. Residues 11 to 33 (SATGMTLSVVSLLIGIANLGLNI) are involved in apical transport and lipid raft association. Residues 28 to 471 (NLGLNIGLHY…HDGAEIIYFK (444 aa)) lie on the Virion surface side of the membrane. The interval 36 to 89 (HYKVGDTPDVNTPNVNGTNSTTTTIINNNTQNNFTNITNIIHNKNEERTFLNLT) is hypervariable stalk region. N-linked (GlcNAc...) asparagine; by host glycosylation is found at N51, N54, N63, N68, N71, and N87. The tract at residues 92–471 (LCEVNSWHIL…HDGAEIIYFK (380 aa)) is head of neuraminidase. Disulfide bonds link C93-C420, C125-C130, C185-C232, C234-C239, C280-C293, C282-C291, C320-C338, and C424-C450. R119 provides a ligand contact to substrate. N147 carries N-linked (GlcNAc...) asparagine; by host glycosylation. The Proton donor/acceptor role is filled by D152. R153 provides a ligand contact to substrate. An N-linked (GlcNAc...) asparagine; by host glycan is attached at N202. 278-279 (EE) is a binding site for substrate. R294 is a binding site for substrate. Ca(2+)-binding residues include D295, G299, and D326. A substrate-binding site is contributed by R373. N-linked (GlcNAc...) asparagine; by host glycosylation occurs at N403. The active-site Nucleophile is the Y407.

It belongs to the glycosyl hydrolase 34 family. As to quaternary structure, homotetramer. Requires Ca(2+) as cofactor. Post-translationally, N-glycosylated.

Its subcellular location is the virion membrane. It localises to the host apical cell membrane. It catalyses the reaction Hydrolysis of alpha-(2-&gt;3)-, alpha-(2-&gt;6)-, alpha-(2-&gt;8)- glycosidic linkages of terminal sialic acid residues in oligosaccharides, glycoproteins, glycolipids, colominic acid and synthetic substrates.. Its activity is regulated as follows. Inhibited by the neuraminidase inhibitors zanamivir (Relenza) and oseltamivir (Tamiflu). These drugs interfere with the release of progeny virus from infected cells and are effective against all influenza strains. Resistance to neuraminidase inhibitors is quite rare. Catalyzes the removal of terminal sialic acid residues from viral and cellular glycoconjugates. Cleaves off the terminal sialic acids on the glycosylated HA during virus budding to facilitate virus release. Additionally helps virus spread through the circulation by further removing sialic acids from the cell surface. These cleavages prevent self-aggregation and ensure the efficient spread of the progeny virus from cell to cell. Otherwise, infection would be limited to one round of replication. Described as a receptor-destroying enzyme because it cleaves a terminal sialic acid from the cellular receptors. May facilitate viral invasion of the upper airways by cleaving the sialic acid moieties on the mucin of the airway epithelial cells. Likely to plays a role in the budding process through its association with lipid rafts during intracellular transport. May additionally display a raft-association independent effect on budding. Plays a role in the determination of host range restriction on replication and virulence. Sialidase activity in late endosome/lysosome traffic seems to enhance virus replication. The polypeptide is Neuraminidase (Influenza A virus (strain A/Gull/Maryland/704/1977 H13N6)).